The sequence spans 227 residues: Small ribosomal subunit protein uS3 (227 aa).

The KH type-2 domain maps to 38–106; sequence LRKYLREKLA…EVHLNIVEIR (69 aa).

This sequence belongs to the universal ribosomal protein uS3 family. As to quaternary structure, part of the 30S ribosomal subunit. Forms a tight complex with proteins S10 and S14.

Its function is as follows. Binds the lower part of the 30S subunit head. Binds mRNA in the 70S ribosome, positioning it for translation. The polypeptide is Small ribosomal subunit protein uS3 (Paramagnetospirillum magneticum (strain ATCC 700264 / AMB-1) (Magnetospirillum magneticum)).